We begin with the raw amino-acid sequence, 432 residues long: Adenylosuccinate synthetase (432 aa).

GTP contacts are provided by residues 13 to 19 (GDEGKGK) and 41 to 43 (GHT). Asp14 serves as the catalytic Proton acceptor. Mg(2+) is bound by residues Asp14 and Gly41. IMP contacts are provided by residues 14 to 17 (DEGK), 39 to 42 (NAGH), Thr130, Arg144, Gln225, Thr240, and Arg304. His42 functions as the Proton donor in the catalytic mechanism. 300-306 (ATTGRRR) provides a ligand contact to substrate. GTP-binding positions include Arg306, 332–334 (KLD), and 415–417 (STG).

It belongs to the adenylosuccinate synthetase family. As to quaternary structure, homodimer. Mg(2+) serves as cofactor.

The protein resides in the cytoplasm. It carries out the reaction IMP + L-aspartate + GTP = N(6)-(1,2-dicarboxyethyl)-AMP + GDP + phosphate + 2 H(+). It participates in purine metabolism; AMP biosynthesis via de novo pathway; AMP from IMP: step 1/2. Functionally, plays an important role in the de novo pathway of purine nucleotide biosynthesis. Catalyzes the first committed step in the biosynthesis of AMP from IMP. This is Adenylosuccinate synthetase from Salmonella heidelberg (strain SL476).